The primary structure comprises 314 residues: Probable cell division protein WhiA (314 aa).

A DNA-binding region (H-T-H motif) is located at residues 274–308 (SLKELGEMVSTGPISKSGMNHRLRKLNELADKIRN).

It belongs to the WhiA family.

Its function is as follows. Involved in cell division and chromosome segregation. This chain is Probable cell division protein WhiA, found in Staphylococcus epidermidis (strain ATCC 35984 / DSM 28319 / BCRC 17069 / CCUG 31568 / BM 3577 / RP62A).